The sequence spans 177 residues: Ribosome maturation factor RimM (177 aa).

A PRC barrel domain is found at 98–171 (GETIFLSEIK…AVVMDLPEGL (74 aa)).

The protein belongs to the RimM family. Binds ribosomal protein uS19.

It localises to the cytoplasm. In terms of biological role, an accessory protein needed during the final step in the assembly of 30S ribosomal subunit, possibly for assembly of the head region. Essential for efficient processing of 16S rRNA. May be needed both before and after RbfA during the maturation of 16S rRNA. It has affinity for free ribosomal 30S subunits but not for 70S ribosomes. In Bdellovibrio bacteriovorus (strain ATCC 15356 / DSM 50701 / NCIMB 9529 / HD100), this protein is Ribosome maturation factor RimM.